We begin with the raw amino-acid sequence, 174 residues long: RNA pyrophosphohydrolase (174 aa).

Residues 6-149 (GFRANVGIVI…KREVYRRAMK (144 aa)) form the Nudix hydrolase domain. A Nudix box motif is present at residues 38-59 (GGIDEGETAEQTMYRELYEEVG).

This sequence belongs to the Nudix hydrolase family. RppH subfamily. The cofactor is a divalent metal cation.

Functionally, accelerates the degradation of transcripts by removing pyrophosphate from the 5'-end of triphosphorylated RNA, leading to a more labile monophosphorylated state that can stimulate subsequent ribonuclease cleavage. The chain is RNA pyrophosphohydrolase from Pseudoalteromonas atlantica (strain T6c / ATCC BAA-1087).